The following is a 180-amino-acid chain: NADH-quinone oxidoreductase subunit I (180 aa).

2 consecutive 4Fe-4S ferredoxin-type domains span residues 46–80 (GRIVLTCDPDGYERCVACNLCAVACPVDCISLQKT) and 90–119 (EFFRINFSRCIFCGLCEEACPTTAIQLTPD). [4Fe-4S] cluster is bound by residues Cys60, Cys63, Cys66, Cys70, Cys99, Cys102, Cys105, and Cys109.

The protein belongs to the complex I 23 kDa subunit family. As to quaternary structure, NDH-1 is composed of 14 different subunits. Subunits NuoA, H, J, K, L, M, N constitute the membrane sector of the complex. The cofactor is [4Fe-4S] cluster.

It is found in the cell membrane. It carries out the reaction a quinone + NADH + 5 H(+)(in) = a quinol + NAD(+) + 4 H(+)(out). In terms of biological role, NDH-1 shuttles electrons from NADH, via FMN and iron-sulfur (Fe-S) centers, to quinones in the respiratory chain. The immediate electron acceptor for the enzyme in this species is believed to be ubiquinone. Couples the redox reaction to proton translocation (for every two electrons transferred, four hydrogen ions are translocated across the cytoplasmic membrane), and thus conserves the redox energy in a proton gradient. The polypeptide is NADH-quinone oxidoreductase subunit I (Baumannia cicadellinicola subsp. Homalodisca coagulata).